A 226-amino-acid polypeptide reads, in one-letter code: 26S proteasome non-ATPase regulatory subunit 10 (226 aa).

The segment at 1 to 37 is required for nuclear localization; sequence MEGCVSNLMVCNLAYSGKLEELKESILADKSLATRTD. An interaction with RB1 region spans residues 1–71; sequence MEGCVSNLMV…LGVPVNDKDD (71 aa). ANK repeat units follow at residues 3–36, 37–69, 70–102, 103–135, 136–168, 169–201, and 202–226; these read GCVS…ATRT, DQDS…VNDK, DDAG…VNAV, NQNG…PDAK, DHYE…TNIQ, DTEG…IYIE, and NKEE…MVEG. Positions 39–226 are interaction with RELA; the sequence is DSRTALHWAC…GLILKRMVEG (188 aa). The interval 171-226 is interaction with RB1; that stretch reads EGNTPLHLACDEERVEEAKLLVSQGASIYIENKEEKTPLQVAKGGLGLILKRMVEG.

In terms of assembly, part of transient complex containing PSMD10, PSMC4, PSMC5 and PAAF1 formed during the assembly of the 26S proteasome. Stays associated throughout the assembly of the PA700/19S RC and is released upon association with the 20S core. Interacts with PSMC4. Interacts with RB1. Interacts with CDK4. Interacts with MDM2. Interacts with RELA. Associates with a CDK4:CCND2 serine/threonine kinase complex. Interacts with ARHGDIA and increases the interaction between ARHGDIA and RHOA, hence promotes ARHGDIA inactivation of RHOA and ROCK. In terms of tissue distribution, tends to be up-regulated in cancer cells with RAS mutations, including lung cancers and adenocarconimas (at protein level).

It is found in the cytoplasm. It localises to the nucleus. Acts as a chaperone during the assembly of the 26S proteasome, specifically of the PA700/19S regulatory complex (RC). In the initial step of the base subcomplex assembly is part of an intermediate PSMD10:PSMC4:PSMC5:PAAF1 module which probably assembles with a PSMD5:PSMC2:PSMC1:PSMD2 module. Independently of the proteasome, regulates EGF-induced AKT activation through inhibition of the RHOA/ROCK/PTEN pathway, leading to prolonged AKT activation. Plays an important role in RAS-induced tumorigenesis. Its function is as follows. Acts as an proto-oncoprotein by being involved in negative regulation of tumor suppressors RB1 and p53/TP53. Overexpression is leading to phosphorylation of RB1 and proteasomal degradation of RB1. Regulates CDK4-mediated phosphorylation of RB1 by competing with CDKN2A for binding with CDK4. Facilitates binding of MDM2 to p53/TP53 and the mono- and polyubiquitination of p53/TP53 by MDM2 suggesting a function in targeting the TP53:MDM2 complex to the 26S proteasome. Involved in p53-independent apoptosis. Involved in regulation of NF-kappa-B by retaining it in the cytoplasm. Binds to the NF-kappa-B component RELA and accelerates its XPO1/CRM1-mediated nuclear export. In Homo sapiens (Human), this protein is 26S proteasome non-ATPase regulatory subunit 10 (PSMD10).